The sequence spans 310 residues: Translocator protein BipD (310 aa).

Coiled coils occupy residues 127–171 and 250–299; these read DPIL…LQDY and DTAR…AIST.

It belongs to the invasin protein D family.

The protein localises to the secreted. In terms of biological role, required for invasion of epithelial cells, as well as for survival within host cells, escape from endocytic vesicles and subsequent actin-tail formation. Probably regulates the secretion of effectors BipB and BipC and their final integration into the target cell membrane. This Burkholderia mallei (strain NCTC 10247) protein is Translocator protein BipD (bipD).